The following is a 524-amino-acid chain: MQPPASAGLFRSPENLPWPYNYMDYLVAGFLVLTAGILLRPWLWLRLRNSKTKDGDEEEDNEEKKKGMIPNGSLGWPVIGETLNFIACGYSSRPVTFMDKRKSLYGKVFKTNIIGTPIIISTDAEVNKVVLQNHGNTFVPAYPKSITELLGENSILSINGPHQKRLHTLIGAFLRSPHLKDRITRDIEASVVLTLASWAQLPLVHVQDEIKKMTFEILVKVLMSTSPGEDMNILKLEFEEFIKGLICIPIKFPGTRLYKSLKAKERLIKMVKKVVEERQVAMTTTSPANDVVDVLLRDGGDSEKQSQPSDFVSGKIVEMMIPGEETMPTAMTLAVKFLSDNPVALAKLVEENMEMKRRKLELGEEYKWTDYMSLSFTQNVINETLRMANIINGVWRKALKDVEIKGYLIPKGWCVLASFISVHMDEDIYDNPYQFDPWRWDRINGSANSSICFTPFGGGQRLCPGLELSKLEISIFLHHLVTRYSWTAEEDEIVSFPTVKMKRRLPIRVATVDDSASPISLEDH.

The chain crosses the membrane as a helical span at residues 25–45 (YLVAGFLVLTAGILLRPWLWL). Position 463 (Cys463) interacts with heme.

This sequence belongs to the cytochrome P450 family. The cofactor is heme. Widely expressed.

The protein localises to the endoplasmic reticulum membrane. It catalyses the reaction 3-epi-6-deoxocathasterone + reduced [NADPH--hemoprotein reductase] + O2 = 6-deoxotyphasterol + oxidized [NADPH--hemoprotein reductase] + H2O + H(+). The enzyme catalyses (22S,24R)-22-hydroxy-5alpha-ergostan-3-one + reduced [NADPH--hemoprotein reductase] + O2 = 3-dehydro-6-deoxoteasterone + oxidized [NADPH--hemoprotein reductase] + H2O + H(+). It participates in plant hormone biosynthesis; brassinosteroid biosynthesis. Involved in brassinosteroid (BR) biosynthesis. Converts typhasterol (TY) to cathasterone (CS) and 6-deoxotyphasterol (6-deoxoTY) to 6-deoxocathasterone (6-deoxoCT). C-23 hydroxylase that converts directly (22S,24R)-22-hydroxy-5-alpha-ergostan-3-one and 3-epi-6-deoxocathasterone to 3-dehydro-6-deoxoteasterone (6-deoxo3DT, 6-deoxo3DHT) and 6-deoxotyphasterol (6-deoxoTY), respectively. These C-23 hydroxylation shortcuts bypass campestanol, 6-deoxocathasterone, and 6-deoxoteasterone (6-deoxoTE). Also catalyzes the conversion of cathasterone to teasterone (TE), (22S,24R)-22-hydroxyergost-4-en-3-one (22-OH-4-en-3-one) to (22R,23R)-22,23-dihydroxy-campest-4-en-3-one (22,23-diOH-4-en-3-one) and (22S)-22-hydroxycampesterol (22-OHCR) to (22R,23R)-22,23-dihydroxycampesterol (22,23-diOHCR). Required for the regulation of polar elongation of leaf cells. Required for the longitudinal elongation of floral organs. This is 3-epi-6-deoxocathasterone 23-monooxygenase CYP90C1 from Arabidopsis thaliana (Mouse-ear cress).